A 438-amino-acid chain; its full sequence is sn-glycerol-3-phosphate-binding periplasmic protein UgpB (438 aa).

An N-terminal signal peptide occupies residues 1–23 (MKPLRYTASALALGLALMANAQA). Sn-glycerol 3-phosphate contacts are provided by tyrosine 65, glutamate 89, serine 144, serine 270, glycine 307, tyrosine 346, and arginine 397.

The protein belongs to the bacterial solute-binding protein 1 family. The complex is composed of two ATP-binding proteins (UgpC), two transmembrane proteins (UgpA and UgpE) and a solute-binding protein (UgpB).

Its subcellular location is the periplasm. Its function is as follows. Part of the ABC transporter complex UgpBAEC involved in sn-glycerol-3-phosphate (G3P) import. Binds G3P. In Escherichia coli O1:K1 / APEC, this protein is sn-glycerol-3-phosphate-binding periplasmic protein UgpB (ugpB).